Consider the following 319-residue polypeptide: tRNA uridine(34) hydroxylase (319 aa).

The region spanning 127–221 (KQEDTVIIDA…YGKDPEVQGE (95 aa)) is the Rhodanese domain. The active-site Cysteine persulfide intermediate is the Cys-181.

It belongs to the TrhO family.

It carries out the reaction uridine(34) in tRNA + AH2 + O2 = 5-hydroxyuridine(34) in tRNA + A + H2O. In terms of biological role, catalyzes oxygen-dependent 5-hydroxyuridine (ho5U) modification at position 34 in tRNAs. The protein is tRNA uridine(34) hydroxylase of Bacillus cereus (strain Q1).